We begin with the raw amino-acid sequence, 173 residues long: MSKHTNIPMFRIGIGYDVHRFDNINNDDSNTSITICGIKINYHKKIIAHSDGDVGLHALADAILGAVGCGSIGQHFPNTDKKWKNAESSHFVIEAQKKAQERGYIISNADIIIICEQPKIMPYALEMQHYIAQFTSIDPSFINIKATTTEKLGAIGRNEGIAAQAIVLCSQQY.

A divalent metal cation is bound by residues Asp17 and His19. Residues 17-19 (DVH) and 49-50 (HS) each bind 4-CDP-2-C-methyl-D-erythritol 2-phosphate. His57 is a binding site for a divalent metal cation. Residues 76–80 (FPNTD), 147–150 (TTTE), and Arg157 each bind 4-CDP-2-C-methyl-D-erythritol 2-phosphate.

It belongs to the IspF family. Homotrimer. A divalent metal cation is required as a cofactor.

It catalyses the reaction 4-CDP-2-C-methyl-D-erythritol 2-phosphate = 2-C-methyl-D-erythritol 2,4-cyclic diphosphate + CMP. It participates in isoprenoid biosynthesis; isopentenyl diphosphate biosynthesis via DXP pathway; isopentenyl diphosphate from 1-deoxy-D-xylulose 5-phosphate: step 4/6. Involved in the biosynthesis of isopentenyl diphosphate (IPP) and dimethylallyl diphosphate (DMAPP), two major building blocks of isoprenoid compounds. Catalyzes the conversion of 4-diphosphocytidyl-2-C-methyl-D-erythritol 2-phosphate (CDP-ME2P) to 2-C-methyl-D-erythritol 2,4-cyclodiphosphate (ME-CPP) with a corresponding release of cytidine 5-monophosphate (CMP). The polypeptide is 2-C-methyl-D-erythritol 2,4-cyclodiphosphate synthase (Ehrlichia ruminantium (strain Welgevonden)).